We begin with the raw amino-acid sequence, 113 residues long: uncharacterized protein (113 aa).

Transmembrane regions (helical) follow at residues 25–45 (FGFCYFLFLISFIMCIVCFII) and 49–69 (FEVEIILVILFPFLLLILSVW).

The protein resides in the host membrane. This is an uncharacterized protein from Spiroplasma citri (SpV1).